Here is a 418-residue protein sequence, read N- to C-terminus: Tyrosine--tRNA ligase 1 (418 aa).

Tyr-34 contacts L-tyrosine. A 'HIGH' region motif is present at residues 39-48; sequence PTADSLHIGH. L-tyrosine-binding residues include Tyr-169 and Gln-173. Positions 230 to 234 match the 'KMSKS' region motif; the sequence is KFGKT. Lys-233 contacts ATP. The S4 RNA-binding domain occupies 352-418; the sequence is TVLIDLLVES…GKKKYFLIRY (67 aa).

The protein belongs to the class-I aminoacyl-tRNA synthetase family. TyrS type 1 subfamily. In terms of assembly, homodimer.

The protein resides in the cytoplasm. It catalyses the reaction tRNA(Tyr) + L-tyrosine + ATP = L-tyrosyl-tRNA(Tyr) + AMP + diphosphate + H(+). Catalyzes the attachment of tyrosine to tRNA(Tyr) in a two-step reaction: tyrosine is first activated by ATP to form Tyr-AMP and then transferred to the acceptor end of tRNA(Tyr). In Bacillus anthracis, this protein is Tyrosine--tRNA ligase 1.